Reading from the N-terminus, the 261-residue chain is Cobalt transport protein CbiM (261 aa).

A signal peptide spans 1–33 (MLRRVLASKRASLILMGMLSFYIIVSASAPAYA). A run of 7 helical transmembrane segments spans residues 41–61 (LPAGWAAFWWLVALPFMLLGV), 76–96 (LLLALAGAFTFVLSALKLPSV), 108–128 (LGSVLFGPLAMSVLGSLVLLF), 140–160 (TLGANAFSMAIAGPFAAYWIY), 172–192 (IAIFLAATLADLLTYIITSVQ), 197–217 (FPAPVGGFIASFAKFAGIFAI), and 220–240 (IPLAISEGLLTVLVWNWLQSY).

The protein belongs to the CbiM family. Forms an energy-coupling factor (ECF) transporter complex composed of an ATP-binding protein (A component, CbiO), a transmembrane protein (T component, CbiQ) and 2 possible substrate-capture proteins (S components, CbiM and CbiN) of unknown stoichimetry.

The protein resides in the cell inner membrane. The protein operates within cofactor biosynthesis; adenosylcobalamin biosynthesis. Part of the energy-coupling factor (ECF) transporter complex CbiMNOQ involved in cobalt import. The polypeptide is Cobalt transport protein CbiM (Nostoc sp. (strain PCC 7120 / SAG 25.82 / UTEX 2576)).